The sequence spans 94 residues: Aspartyl/glutamyl-tRNA(Asn/Gln) amidotransferase subunit C (94 aa).

It belongs to the GatC family. As to quaternary structure, heterotrimer of A, B and C subunits.

It catalyses the reaction L-glutamyl-tRNA(Gln) + L-glutamine + ATP + H2O = L-glutaminyl-tRNA(Gln) + L-glutamate + ADP + phosphate + H(+). It carries out the reaction L-aspartyl-tRNA(Asn) + L-glutamine + ATP + H2O = L-asparaginyl-tRNA(Asn) + L-glutamate + ADP + phosphate + 2 H(+). In terms of biological role, allows the formation of correctly charged Asn-tRNA(Asn) or Gln-tRNA(Gln) through the transamidation of misacylated Asp-tRNA(Asn) or Glu-tRNA(Gln) in organisms which lack either or both of asparaginyl-tRNA or glutaminyl-tRNA synthetases. The reaction takes place in the presence of glutamine and ATP through an activated phospho-Asp-tRNA(Asn) or phospho-Glu-tRNA(Gln). In Caldicellulosiruptor saccharolyticus (strain ATCC 43494 / DSM 8903 / Tp8T 6331), this protein is Aspartyl/glutamyl-tRNA(Asn/Gln) amidotransferase subunit C.